Reading from the N-terminus, the 435-residue chain is MIKNSITNKLYVEAKKIIPGGVNSPARSFYFVKEIPVIAKRSKGPYIFDVDNNKYIDYICSWGASILGHNNYYITSKIIEYSKKGLNFGLLTEIEIKIARLISKYIPSIEMIRMVNSGTEATMSAIRLARSYTKKNKIIKFDGCYHGHADFLLANSNLDPYDLFSSNPISSGIPKNILKDTLICPYNDYESIEKIFDLYPNKIACIIVEPIAGNMGCVLPEKNFLYKLRMLCNKFNSLLIMDEIITGFRISLGGAQSYYNIYPDITCLGKIIGGGLPIGAFGGKKRIMNHVSPSGSVYQAGTFSGNPISMISGYACLKLLKSPDLYNKLNKKTEYLVNELRSSACDNKIPVVINSLGSMFSIFFTNLDKIKCYKDVSSCNYKKFILFFNEIKKLGILFSPSLFESNFITLMHKKKDLEKTIDSANKVFKILKNKV.

Lys-270 is modified (N6-(pyridoxal phosphate)lysine).

This sequence belongs to the class-III pyridoxal-phosphate-dependent aminotransferase family. HemL subfamily. In terms of assembly, homodimer. The cofactor is pyridoxal 5'-phosphate.

It localises to the cytoplasm. It carries out the reaction (S)-4-amino-5-oxopentanoate = 5-aminolevulinate. It participates in porphyrin-containing compound metabolism; protoporphyrin-IX biosynthesis; 5-aminolevulinate from L-glutamyl-tRNA(Glu): step 2/2. The polypeptide is Glutamate-1-semialdehyde 2,1-aminomutase (Wigglesworthia glossinidia brevipalpis).